Consider the following 813-residue polypeptide: Leucine--tRNA ligase (813 aa).

A 'HIGH' region motif is present at residues 41 to 51 (PYPSGTLHMGH). Positions 575-579 (KMSKS) match the 'KMSKS' region motif. K578 contributes to the ATP binding site.

Belongs to the class-I aminoacyl-tRNA synthetase family.

It is found in the cytoplasm. It carries out the reaction tRNA(Leu) + L-leucine + ATP = L-leucyl-tRNA(Leu) + AMP + diphosphate. The chain is Leucine--tRNA ligase from Francisella tularensis subsp. tularensis (strain FSC 198).